The following is a 78-amino-acid chain: Short neurotoxin SNTX14 (78 aa).

The first 21 residues, methionine 1–threonine 21, serve as a signal peptide directing secretion. Cystine bridges form between cysteine 24-cysteine 40, cysteine 33-cysteine 58, cysteine 62-cysteine 70, and cysteine 71-cysteine 76.

Belongs to the three-finger toxin family. Short-chain subfamily. In terms of tissue distribution, expressed by the venom gland.

Its subcellular location is the secreted. This three-finger toxin binds and inhibits the nicotinic acetylcholine receptor (nAChR). This Ophiophagus hannah (King cobra) protein is Short neurotoxin SNTX14.